Consider the following 828-residue polypeptide: Protein TAPT1 homolog (828 aa).

Composition is skewed to low complexity over residues 67–83 (NNNNNNNSNNVSSGNHI), 212–233 (QQTQPQPQPQTQTTQQPSSQQP), and 302–321 (SNNNDNNDNNNNNNSKNNNN). Disordered regions lie at residues 67–92 (NNNNNNNSNNVSSGNHITNSNSNSSG), 212–236 (QQTQPQPQPQTQTTQQPSSQQPFSY), and 297–346 (QTTP…TSSI). The next 5 helical transmembrane spans lie at 428–448 (ISFGFLVCFDSFLFLFTFLPI), 472–492 (QIFDLFRGFIWVTCFVFLNFI), 562–582 (ILGPFTHLLVATGYVCLHSLV), 722–742 (SSWGVNNIIGFVPFPLASIVV), and 754–774 (IFGIFLMVQIYICLVLLKIFI). A compositionally biased stretch (low complexity) spans 797-822 (LSSSSSSSSSNSLNTTSTTSTSTSTT). The segment at 797–828 (LSSSSSSSSSNSLNTTSTTSTSTSTTNDKKNN) is disordered.

This sequence belongs to the TAPT1 family.

It localises to the membrane. This chain is Protein TAPT1 homolog, found in Dictyostelium discoideum (Social amoeba).